We begin with the raw amino-acid sequence, 241 residues long: DNA repair protein RecO (241 aa).

This sequence belongs to the RecO family.

Functionally, involved in DNA repair and RecF pathway recombination. The chain is DNA repair protein RecO from Yersinia pseudotuberculosis serotype O:1b (strain IP 31758).